The sequence spans 625 residues: 1-deoxy-D-xylulose-5-phosphate synthase (625 aa).

Thiamine diphosphate is bound by residues H74 and 115-117; that span reads GHS. D146 is a binding site for Mg(2+). Thiamine diphosphate-binding positions include 147–148, N175, Y286, and E367; that span reads GA. N175 contributes to the Mg(2+) binding site.

Belongs to the transketolase family. DXPS subfamily. In terms of assembly, homodimer. It depends on Mg(2+) as a cofactor. Thiamine diphosphate is required as a cofactor.

The enzyme catalyses D-glyceraldehyde 3-phosphate + pyruvate + H(+) = 1-deoxy-D-xylulose 5-phosphate + CO2. The protein operates within metabolic intermediate biosynthesis; 1-deoxy-D-xylulose 5-phosphate biosynthesis; 1-deoxy-D-xylulose 5-phosphate from D-glyceraldehyde 3-phosphate and pyruvate: step 1/1. In terms of biological role, catalyzes the acyloin condensation reaction between C atoms 2 and 3 of pyruvate and glyceraldehyde 3-phosphate to yield 1-deoxy-D-xylulose-5-phosphate (DXP). The chain is 1-deoxy-D-xylulose-5-phosphate synthase from Lachnoclostridium phytofermentans (strain ATCC 700394 / DSM 18823 / ISDg) (Clostridium phytofermentans).